The chain runs to 83 residues: uncharacterized protein (83 aa).

A helical transmembrane segment spans residues 58-78 (AVLLWIAIIATLGNIVVVGVV).

Its subcellular location is the membrane. This is an uncharacterized protein from Homo sapiens (Human).